Reading from the N-terminus, the 505-residue chain is 2,3-bisphosphoglycerate-independent phosphoglycerate mutase (505 aa).

Mn(2+)-binding residues include Asp12 and Ser62. The active-site Phosphoserine intermediate is Ser62. Residues His123, 153 to 154 (RD), Arg185, Arg191, 257 to 260 (RPDR), and Lys330 contribute to the substrate site. The Mn(2+) site is built by Asp397, His401, Asp438, His439, and His456.

This sequence belongs to the BPG-independent phosphoglycerate mutase family. As to quaternary structure, monomer. Mn(2+) serves as cofactor.

It carries out the reaction (2R)-2-phosphoglycerate = (2R)-3-phosphoglycerate. It participates in carbohydrate degradation; glycolysis; pyruvate from D-glyceraldehyde 3-phosphate: step 3/5. Functionally, catalyzes the interconversion of 2-phosphoglycerate and 3-phosphoglycerate. This Staphylococcus aureus (strain COL) protein is 2,3-bisphosphoglycerate-independent phosphoglycerate mutase.